The chain runs to 178 residues: MLDPVAESLGYEIVRLRLMGGTEQRRLQIMAEHPLLEDGSGGDMNVEDCAKLSRAVSEVLDAADPIAGEYTLEVSSPGIDRPLTRLKDFDDYAGLEARIELDRVAEGRKRFKGELAGVEDDQVGLNIEGEDDVTVYFPFAWVIDAKLVMTDALMERGAKQRAARLESDNEDLSESEED.

It belongs to the RimP family.

Its subcellular location is the cytoplasm. In terms of biological role, required for maturation of 30S ribosomal subunits. The chain is Ribosome maturation factor RimP from Caulobacter vibrioides (strain ATCC 19089 / CIP 103742 / CB 15) (Caulobacter crescentus).